A 437-amino-acid polypeptide reads, in one-letter code: Elongation factor 1-gamma (437 aa).

N-acetylalanine is present on Ala2. The GST N-terminal domain maps to 2–87 (AAGTLYTYPE…YVSNEELRGS (86 aa)). A GST C-terminal domain is found at 88-216 (TPEAAAQVVQ…VKLCEKMAQF (129 aa)). An N6-acetyllysine mark is found at Lys147 and Lys212. Over residues 221–254 (FAESQPKKDTPRKEKGSREEKQKPQAERKEEKKA) the composition is skewed to basic and acidic residues. A disordered region spans residues 221-268 (FAESQPKKDTPRKEKGSREEKQKPQAERKEEKKAAAPAPEEEMDECEQ). A Glycyl lysine isopeptide (Lys-Gly) (interchain with G-Cter in SUMO1) cross-link involves residue Lys253. The EF-1-gamma C-terminal domain occupies 276–437 (AKDPFAHLPK…KAVNQGKIFK (162 aa)). Lys285 is covalently cross-linked (Glycyl lysine isopeptide (Lys-Gly) (interchain with G-Cter in SUMO2)). At Lys401 the chain carries N6-acetyllysine. Lys434 bears the N6-acetyllysine; alternate mark. An N6-malonyllysine; alternate modification is found at Lys434.

In terms of assembly, EF-1 is composed of four subunits: alpha, beta, delta, and gamma.

Functionally, probably plays a role in anchoring the complex to other cellular components. The chain is Elongation factor 1-gamma (Eef1g) from Mus musculus (Mouse).